The following is an 81-amino-acid chain: Probable small nuclear ribonucleoprotein G (81 aa).

The Sm domain occupies 5-76 (GQPPALKKYM…VVTVEALEPV (72 aa)).

This sequence belongs to the snRNP Sm proteins family.

The protein resides in the nucleus. Probable common Sm protein, is found in U1 and U2 snRNPs and may be part of the spliceosome. The protein is Probable small nuclear ribonucleoprotein G (C29) of Medicago sativa (Alfalfa).